Consider the following 142-residue polypeptide: Deoxyuridine 5'-triphosphate nucleotidohydrolase (142 aa).

Substrate is bound by residues Arg62 to Gly64, Asn75, and Thr79 to Asp81.

Belongs to the dUTPase family. It depends on Mg(2+) as a cofactor.

The enzyme catalyses dUTP + H2O = dUMP + diphosphate + H(+). It participates in pyrimidine metabolism; dUMP biosynthesis; dUMP from dCTP (dUTP route): step 2/2. This enzyme is involved in nucleotide metabolism: it produces dUMP, the immediate precursor of thymidine nucleotides and it decreases the intracellular concentration of dUTP so that uracil cannot be incorporated into DNA. The sequence is that of Deoxyuridine 5'-triphosphate nucleotidohydrolase from Picosynechococcus sp. (strain ATCC 27264 / PCC 7002 / PR-6) (Agmenellum quadruplicatum).